The chain runs to 118 residues: uncharacterized protein (118 aa).

Residues 1-26 (MTKLKMLSMLTVMIASLFIFSSQALA) form the signal peptide. The SH3b domain occupies 30 to 104 (FTVSTSSGAP…VNIGYVSDTY (75 aa)).

It to B.subtilis YraI.

This is an uncharacterized protein from Bacillus subtilis (strain 168).